Consider the following 258-residue polypeptide: Tryptophan synthase alpha chain (258 aa).

Residues Glu50 and Asp61 each act as proton acceptor in the active site.

The protein belongs to the TrpA family. In terms of assembly, tetramer of two alpha and two beta chains.

The catalysed reaction is (1S,2R)-1-C-(indol-3-yl)glycerol 3-phosphate + L-serine = D-glyceraldehyde 3-phosphate + L-tryptophan + H2O. Its pathway is amino-acid biosynthesis; L-tryptophan biosynthesis; L-tryptophan from chorismate: step 5/5. In terms of biological role, the alpha subunit is responsible for the aldol cleavage of indoleglycerol phosphate to indole and glyceraldehyde 3-phosphate. In Clostridium beijerinckii (strain ATCC 51743 / NCIMB 8052) (Clostridium acetobutylicum), this protein is Tryptophan synthase alpha chain.